The sequence spans 148 residues: Putative nickel-responsive regulator (148 aa).

Residues H88, H99, H101, and C107 each coordinate Ni(2+).

This sequence belongs to the transcriptional regulatory CopG/NikR family. Ni(2+) serves as cofactor.

Functionally, transcriptional regulator. This chain is Putative nickel-responsive regulator, found in Helicobacter pylori (strain G27).